A 448-amino-acid chain; its full sequence is DNA primase DnaG (448 aa).

The 75-residue stretch at 186-260 (DSIIVVEGRN…EADFVARAPP (75 aa)) folds into the Toprim domain. Mg(2+) is bound by residues E192, D234, and D236. Residues 318–340 (AEVIEEPPEQPPKNEEIREEQSQ) form a disordered region. Residues 329–338 (PKNEEIREEQ) show a composition bias toward basic and acidic residues.

It belongs to the archaeal DnaG primase family. As to quaternary structure, forms a ternary complex with MCM helicase and DNA. Component of the archaeal exosome complex. Mg(2+) serves as cofactor.

It catalyses the reaction ssDNA + n NTP = ssDNA/pppN(pN)n-1 hybrid + (n-1) diphosphate.. Its function is as follows. RNA polymerase that catalyzes the synthesis of short RNA molecules used as primers for DNA polymerase during DNA replication. Also part of the exosome, which is a complex involved in RNA degradation. Acts as a poly(A)-binding protein that enhances the interaction between heteromeric, adenine-rich transcripts and the exosome. This chain is DNA primase DnaG, found in Thermoplasma acidophilum (strain ATCC 25905 / DSM 1728 / JCM 9062 / NBRC 15155 / AMRC-C165).